A 431-amino-acid polypeptide reads, in one-letter code: Glutamate-1-semialdehyde 2,1-aminomutase (431 aa).

At K269 the chain carries N6-(pyridoxal phosphate)lysine.

It belongs to the class-III pyridoxal-phosphate-dependent aminotransferase family. HemL subfamily. In terms of assembly, homodimer. Pyridoxal 5'-phosphate serves as cofactor.

The protein resides in the cytoplasm. The catalysed reaction is (S)-4-amino-5-oxopentanoate = 5-aminolevulinate. It functions in the pathway porphyrin-containing compound metabolism; protoporphyrin-IX biosynthesis; 5-aminolevulinate from L-glutamyl-tRNA(Glu): step 2/2. Its pathway is porphyrin-containing compound metabolism; chlorophyll biosynthesis. In Chlorobium chlorochromatii (strain CaD3), this protein is Glutamate-1-semialdehyde 2,1-aminomutase.